An 83-amino-acid polypeptide reads, in one-letter code: Greglin (83 aa).

Phosphoserine occurs at positions 8, 11, and 15. 4 cysteine pairs are disulfide-bonded: cysteine 21/cysteine 55, cysteine 25/cysteine 48, cysteine 33/cysteine 69, and cysteine 53/cysteine 76.

In terms of biological role, serine protease inhibitor. Inhibits porcine pancreatic elastase with a Ki of 58.3 nM, human neutrophil elastase with a Ki of 3.6 nM, cathepsin G with a Ki of 153.5 nM, chymotrypsin with a Ki of 26.7 nM and subtilisin with a Ki of 0.68 nM. Does not inhibit neutrophil protease 3 or pancreatic trypsin. This chain is Greglin, found in Schistocerca gregaria (Desert locust).